Consider the following 340-residue polypeptide: MGRDEEAAAQAEAWNHGFGFIKTSVIKTAIELEIPDILHNQGGPLSLSALSSAVGVPPDRLHRIMRFLAHHGVSKKTASPPGESDYYYAETAVSRSLTKDNLGPFVLLQGAQRGPSACITAQGLKSRERPGVEELGSDPLYEDPIFTEKVFRDAMTCHARVTTSAVIENYGEGFRGVGSLVDVGGSYGMTLGMLVEAFPWIRGICYDLPPVVAKAKPLHGVEFVAGSMFESVPKADVIMLMFVLHNWSDNECIDILKRCKEAIPAETGRLMIIDAIIDEDGEGDEFAGARLGLDVTMMAVTYEGKERTHREWAYILTEAGFRKYVVNNIKALESLIEAYP.

Aspartate 207 is a binding site for S-adenosyl-L-methionine. Histidine 245 (proton acceptor) is an active-site residue.

This sequence belongs to the class I-like SAM-binding methyltransferase superfamily. Cation-independent O-methyltransferase family. As to quaternary structure, homodimer. In terms of tissue distribution, expressed in leaves.

The enzyme catalyses (2S)-naringenin + S-adenosyl-L-methionine = (2S)-sakuranetin + S-adenosyl-L-homocysteine + H(+). It catalyses the reaction scutellarein + S-adenosyl-L-methionine = scutellarein 7-methyl ether + S-adenosyl-L-homocysteine. It carries out the reaction apigenin + S-adenosyl-L-methionine = genkwanin + S-adenosyl-L-homocysteine + H(+). The catalysed reaction is luteolin + S-adenosyl-L-methionine = luteolin 7-methyl ether + S-adenosyl-L-homocysteine + H(+). The enzyme catalyses chrysoeriol + S-adenosyl-L-methionine = velutin + S-adenosyl-L-homocysteine. It catalyses the reaction diosmetin + S-adenosyl-L-methionine = luteolin 4',7-dimethyl ether + S-adenosyl-L-homocysteine. It carries out the reaction acacetin + S-adenosyl-L-methionine = apigenin 4',7-dimethyl ether + S-adenosyl-L-homocysteine. The catalysed reaction is scutellarein 4'-methyl ether + S-adenosyl-L-methionine = ladanein + S-adenosyl-L-homocysteine. It participates in flavonoid metabolism. In terms of biological role, flavonoid 7-O-methyltransferase involved in the biosynthesis of polymethoxylated flavonoids natural products such as nevadensin and salvigenin, aroma compounds which contribute to the flavor of sweet basil, and exhibit pharmacological activities such as anti-allergic, anti-oxidant, antibacterial, anti-proliferative, and anti-inflammatory effects. Catalyzes S-adenosylmethionine-dependent regioselective 7-O-methylation of flavonoids; active on various hydroxylated flavonoid substrates, including apigenin (API) and luteolin (LUT), and, with a lower efficiency, scutellarein (SCU), naringenin (NAR), chrysoeriol (CHRYS), diosmetin (DIOS), acacetin (ACA) and scutellarein-7-methyl ether (SCU7Me). In Ocimum basilicum (Sweet basil), this protein is Flavonoid 7-O-methyltransferase 1.